Consider the following 96-residue polypeptide: Co-chaperonin GroES (96 aa).

The protein belongs to the GroES chaperonin family. As to quaternary structure, heptamer of 7 subunits arranged in a ring. Interacts with the chaperonin GroEL.

Its subcellular location is the cytoplasm. Functionally, together with the chaperonin GroEL, plays an essential role in assisting protein folding. The GroEL-GroES system forms a nano-cage that allows encapsulation of the non-native substrate proteins and provides a physical environment optimized to promote and accelerate protein folding. GroES binds to the apical surface of the GroEL ring, thereby capping the opening of the GroEL channel. In Vibrio atlanticus (strain LGP32) (Vibrio splendidus (strain Mel32)), this protein is Co-chaperonin GroES.